Consider the following 239-residue polypeptide: Ribonuclease PH (239 aa).

Residues R86 and 124-126 (GTR) each bind phosphate.

The protein belongs to the RNase PH family. In terms of assembly, homohexameric ring arranged as a trimer of dimers.

It carries out the reaction tRNA(n+1) + phosphate = tRNA(n) + a ribonucleoside 5'-diphosphate. Functionally, phosphorolytic 3'-5' exoribonuclease that plays an important role in tRNA 3'-end maturation. Removes nucleotide residues following the 3'-CCA terminus of tRNAs; can also add nucleotides to the ends of RNA molecules by using nucleoside diphosphates as substrates, but this may not be physiologically important. Probably plays a role in initiation of 16S rRNA degradation (leading to ribosome degradation) during starvation. The polypeptide is Ribonuclease PH (Anaeromyxobacter dehalogenans (strain 2CP-C)).